The sequence spans 522 residues: Transactivator/viroplasmin protein (522 aa).

Polar residues predominate over residues 111–126; it reads QGIQIPQKSEPNSSVA. Disordered regions lie at residues 111–133 and 491–522; these read QGIQ…AESG and SADS…KASG.

It belongs to the caulimoviridae viroplasmin family.

Its subcellular location is the host cytoplasm. Functionally, enhances the ribosomal termination-reinitiation event leading to the translation of major open reading frames on the polycistronic viral RNAs. This is Transactivator/viroplasmin protein from Arabidopsis thaliana (Mouse-ear cress).